The primary structure comprises 104 residues: MQKIRRDDEIIVIAGKDKGKRGKVLKVLADNRLVVGGLNLVKRHTKPNPMSGVQGGIVEKEAPLHASNVAIFNGETNKADRVGFKVEDGKKIRVFKSTQKAVDA.

Belongs to the universal ribosomal protein uL24 family. Part of the 50S ribosomal subunit.

In terms of biological role, one of two assembly initiator proteins, it binds directly to the 5'-end of the 23S rRNA, where it nucleates assembly of the 50S subunit. Functionally, one of the proteins that surrounds the polypeptide exit tunnel on the outside of the subunit. The polypeptide is Large ribosomal subunit protein uL24 (Pseudomonas fluorescens (strain Pf0-1)).